A 325-amino-acid polypeptide reads, in one-letter code: Protein FAM50B (325 aa).

An N-acetylalanine modification is found at Ala-2. Residues 137-160 (RRAGNLGKNPDVDTSFLPDRDREE) are disordered.

Belongs to the FAM50 family.

The protein is Protein FAM50B (FAM50B) of Macaca fascicularis (Crab-eating macaque).